The chain runs to 166 residues: RING-H2 finger protein ATL79 (166 aa).

A signal peptide spans 1–16 (MRLLVAEAASPLSSAA). Residues 41–61 (SVLLILVISALICALSLYAAI) traverse the membrane as a helical segment. The tract at residues 71–90 (TEDDHKPDPEAAASSTPTTP) is disordered. The segment covering 81-90 (AAASSTPTTP) has biased composition (low complexity). The RING-type; atypical zinc-finger motif lies at 107 to 149 (CAICLSEFEQGESIQVLEKCQHGFHVKCIHKWLSTRSSCPTCR).

Belongs to the RING-type zinc finger family. ATL subfamily.

It is found in the membrane. It catalyses the reaction S-ubiquitinyl-[E2 ubiquitin-conjugating enzyme]-L-cysteine + [acceptor protein]-L-lysine = [E2 ubiquitin-conjugating enzyme]-L-cysteine + N(6)-ubiquitinyl-[acceptor protein]-L-lysine.. The protein operates within protein modification; protein ubiquitination. The chain is RING-H2 finger protein ATL79 (ATL79) from Arabidopsis thaliana (Mouse-ear cress).